Consider the following 206-residue polypeptide: 3-demethoxyubiquinol 3-hydroxylase (206 aa).

6 residues coordinate Fe cation: Glu-55, Glu-85, His-88, Glu-137, Glu-169, and His-172.

This sequence belongs to the COQ7 family. It depends on Fe cation as a cofactor.

It is found in the cell membrane. It carries out the reaction a 5-methoxy-2-methyl-3-(all-trans-polyprenyl)benzene-1,4-diol + AH2 + O2 = a 3-demethylubiquinol + A + H2O. The protein operates within cofactor biosynthesis; ubiquinone biosynthesis. Its function is as follows. Catalyzes the hydroxylation of 2-nonaprenyl-3-methyl-6-methoxy-1,4-benzoquinol during ubiquinone biosynthesis. The sequence is that of 3-demethoxyubiquinol 3-hydroxylase from Chromobacterium violaceum (strain ATCC 12472 / DSM 30191 / JCM 1249 / CCUG 213 / NBRC 12614 / NCIMB 9131 / NCTC 9757 / MK).